Here is a 329-residue protein sequence, read N- to C-terminus: Prostaglandin reductase 1 (329 aa).

Threonine 18 carries the post-translational modification Phosphothreonine. Serine 20 carries the phosphoserine modification. NADP(+) contacts are provided by residues 152–155 (GAVG), lysine 178, tyrosine 193, asparagine 217, 239–245 (CGAISTY), 270–272 (FIV), and asparagine 321. Lysine 178 bears the N6-(2-hydroxyisobutyryl)lysine; alternate mark. Position 178 is an N6-acetyllysine; alternate (lysine 178).

The protein belongs to the NADP-dependent oxidoreductase L4BD family. As to quaternary structure, monomer or homodimer. In terms of tissue distribution, ubiquitously distributed in various tissues and leukocytes, the kidney and liver had the highest enzyme activities.

The protein resides in the cytoplasm. It catalyses the reaction 13,14-dihydro-15-oxo-prostaglandin E1 + NADP(+) = 15-oxoprostaglandin E1 + NADPH + H(+). The enzyme catalyses 13,14-dihydro-15-oxo-prostaglandin E2 + NADP(+) = 15-oxoprostaglandin E2 + NADPH + H(+). The catalysed reaction is 13,14-dihydro-15-oxo-prostaglandin E2 + NAD(+) = 15-oxoprostaglandin E2 + NADH + H(+). It carries out the reaction 13,14-dihydro-15-oxo-prostaglandin F1alpha + NADP(+) = 15-oxoprostaglandin F1alpha + NADPH + H(+). It catalyses the reaction 13,14-dihydro-15-oxo-PGF2alpha + NADP(+) = 15-oxoprostaglandin F2alpha + NADPH + H(+). The enzyme catalyses leukotriene B4 + NADP(+) = 12-oxo-leukotriene B4 + NADPH + H(+). The catalysed reaction is 20-hydroxy-leukotriene B4 + NADP(+) = 12-oxo-20-hydroxy-leukotriene B4 + NADPH + H(+). It carries out the reaction 6-trans-leukotriene B4 + NADP(+) = 12-oxo-(5S)-hydroxy-(6E,8E,10E,14Z)-eicosatetraenoate + NADPH + H(+). It catalyses the reaction (5S,12S)-dihydroxy-(6E,10E,12E,14Z)-eicosatetraenoate + NADP(+) = 12-oxo-(5S)-hydroxy-(6E,8E,10E,14Z)-eicosatetraenoate + NADPH + H(+). The enzyme catalyses 15-oxo-(5S,6R)-dihydroxy-(7E,9E,11Z,13E)-eicosatetraenoate + NADH + H(+) = 15-oxo-(5S,6R)-dihydroxy-(7E,9E,11Z)-eicosatrienoate + NAD(+). The catalysed reaction is an n-alkanal + NADP(+) = an alk-2-enal + NADPH + H(+). It carries out the reaction hexanal + NADP(+) = (E)-hex-2-enal + NADPH + H(+). It catalyses the reaction octanal + NADP(+) = (2E)-octenal + NADPH + H(+). The enzyme catalyses decanal + NADP(+) = (2E)-decenal + NADPH + H(+). The catalysed reaction is dodecanal + NADP(+) = (2E)-dodecenal + NADPH + H(+). It carries out the reaction 4-hydroxynonanal + NADP(+) = (E)-4-hydroxynon-2-enal + NADPH + H(+). It catalyses the reaction pentan-2-one + NADP(+) = (E)-pent-3-en-2-one + NADPH + H(+). The enzyme catalyses nonan-2-one + NADP(+) = (3E)-nonen-2-one + NADPH + H(+). Its activity is regulated as follows. Down-regulated by nonsteroidal anti-inflammatory drugs diclofenac, indomethacin and niflumic acid. In terms of biological role, NAD(P)H-dependent oxidoreductase involved in metabolic inactivation of pro- and anti-inflammatory eicosanoids: prostaglandins (PG), leukotrienes (LT) and lipoxins (LX). Preferentially uses NADPH over NADH as cofactor. Catalyzes with high efficiency the reduction of the 13,14 double bond of 15-oxoPGs, including 15-oxo-PGE1, 15-oxo-PGE2, 15-oxo-PGF1-alpha and 15-oxo-PGF2-alpha. Catalyzes with lower efficiency the oxidation of the hydroxyl group at C12 of LTB4 and its derivatives, converting them into biologically less active 12-oxo-LTB4 metabolites. Reduces 15-oxo-LXA4 to 13,14 dihydro-15-oxo-LXA4 and may promote neutrophil recruitment at the inflammatory site. Plays a role in metabolic detoxification of alkenals and ketones. Reduces alpha,beta-unsaturated alkenals and ketones, particularly those with medium-chain length, showing highest affinity toward (2E)-decenal and (3E)-3-nonen-2-one. May inactivate 4-hydroxy-2-nonenal, a cytotoxic lipid constituent of oxidized low-density lipoprotein particles. The sequence is that of Prostaglandin reductase 1 (PTGR1) from Sus scrofa (Pig).